The following is a 360-amino-acid chain: Phosphate acyltransferase (360 aa).

The protein belongs to the PlsX family. In terms of assembly, homodimer. Probably interacts with PlsY.

Its subcellular location is the cytoplasm. The enzyme catalyses a fatty acyl-[ACP] + phosphate = an acyl phosphate + holo-[ACP]. Its pathway is lipid metabolism; phospholipid metabolism. Catalyzes the reversible formation of acyl-phosphate (acyl-PO(4)) from acyl-[acyl-carrier-protein] (acyl-ACP). This enzyme utilizes acyl-ACP as fatty acyl donor, but not acyl-CoA. This Janthinobacterium sp. (strain Marseille) (Minibacterium massiliensis) protein is Phosphate acyltransferase.